A 589-amino-acid polypeptide reads, in one-letter code: 5'-AMP-activated protein kinase catalytic subunit alpha-1 (589 aa).

The Protein kinase domain maps to Phe-24–Phe-276. ATP is bound by residues Ile-30 to Val-38 and Lys-53. Asp-147 acts as the Proton acceptor in catalysis.

The protein belongs to the protein kinase superfamily. CAMK Ser/Thr protein kinase family. SNF1 subfamily.

It carries out the reaction L-seryl-[protein] + ATP = O-phospho-L-seryl-[protein] + ADP + H(+). The catalysed reaction is L-threonyl-[protein] + ATP = O-phospho-L-threonyl-[protein] + ADP + H(+). In terms of biological role, probably does not act as a sensor that couples lifespan to information about energy levels and insulin-like signals. Together with aak-2, involved in the establishment of germline stem cell (GSC) quiescence during dauer development. Plays a role in the maintenance of glycogen stores which are necessary for resistance to hyperosmotic stress. This chain is 5'-AMP-activated protein kinase catalytic subunit alpha-1 (aak-1), found in Caenorhabditis elegans.